Here is an 81-residue protein sequence, read N- to C-terminus: Large ribosomal subunit protein bL27 (81 aa).

The disordered stretch occupies residues 1–22 (MAHKKGQGSSRNGRDSNAQRRG).

Belongs to the bacterial ribosomal protein bL27 family.

The sequence is that of Large ribosomal subunit protein bL27 from Rhodopirellula baltica (strain DSM 10527 / NCIMB 13988 / SH1).